We begin with the raw amino-acid sequence, 178 residues long: MMRVGRTLANKKEIVAELKERLRESQMALVIDYQGLSDAEMKDLRQRLRKCNASCKVTKNTLMELAVKESDTWQPITQFLKGPSAFLLLKDDIGGAIKAYQEFQKATKKTTLRGGVMEGRALDEAQVKAIGDLPSKEQLMAQIAGALNAVTAKIAIGIKEVPASLARATQAIADKGAA.

Belongs to the universal ribosomal protein uL10 family. In terms of assembly, part of the ribosomal stalk of the 50S ribosomal subunit. The N-terminus interacts with L11 and the large rRNA to form the base of the stalk. The C-terminus forms an elongated spine to which L12 dimers bind in a sequential fashion forming a multimeric L10(L12)X complex.

In terms of biological role, forms part of the ribosomal stalk, playing a central role in the interaction of the ribosome with GTP-bound translation factors. This Thermosynechococcus vestitus (strain NIES-2133 / IAM M-273 / BP-1) protein is Large ribosomal subunit protein uL10.